Here is a 124-residue protein sequence, read N- to C-terminus: Fluoride-specific ion channel FluC (124 aa).

4 consecutive transmembrane segments (helical) span residues 4–24, 32–52, 67–87, and 96–116; these read IVAI…LAGW, GFPY…GLIM, IGLT…SYET, and FITA…CTWL. The Na(+) site is built by G75 and T78.

It belongs to the fluoride channel Fluc/FEX (TC 1.A.43) family.

It is found in the cell inner membrane. It carries out the reaction fluoride(in) = fluoride(out). Na(+) is not transported, but it plays an essential structural role and its presence is essential for fluoride channel function. In terms of biological role, fluoride-specific ion channel. Important for reducing fluoride concentration in the cell, thus reducing its toxicity. The protein is Fluoride-specific ion channel FluC of Geobacter metallireducens (strain ATCC 53774 / DSM 7210 / GS-15).